The chain runs to 121 residues: Small ribosomal subunit protein uS13 (121 aa).

Residues 91–121 form a disordered region; it reads HRRGLPVRGQNTKNNARTRKGPSKTVAGKKK. The segment covering 106–121 has biased composition (basic residues); it reads ARTRKGPSKTVAGKKK.

Belongs to the universal ribosomal protein uS13 family. In terms of assembly, part of the 30S ribosomal subunit. Forms a loose heterodimer with protein S19. Forms two bridges to the 50S subunit in the 70S ribosome.

Functionally, located at the top of the head of the 30S subunit, it contacts several helices of the 16S rRNA. In the 70S ribosome it contacts the 23S rRNA (bridge B1a) and protein L5 of the 50S subunit (bridge B1b), connecting the 2 subunits; these bridges are implicated in subunit movement. Contacts the tRNAs in the A and P-sites. The protein is Small ribosomal subunit protein uS13 of Listeria welshimeri serovar 6b (strain ATCC 35897 / DSM 20650 / CCUG 15529 / CIP 8149 / NCTC 11857 / SLCC 5334 / V8).